The primary structure comprises 418 residues: Tyrosine--tRNA ligase 1 (418 aa).

An L-tyrosine-binding site is contributed by Tyr34. Positions 39–48 (PTADSLHIGH) match the 'HIGH' region motif. L-tyrosine-binding residues include Tyr169 and Gln173. Positions 230–234 (KFGKT) match the 'KMSKS' region motif. Lys233 lines the ATP pocket. One can recognise an S4 RNA-binding domain in the interval 352–418 (TVLIDLLVES…GKKKYFLIRY (67 aa)).

It belongs to the class-I aminoacyl-tRNA synthetase family. TyrS type 1 subfamily. As to quaternary structure, homodimer.

The protein resides in the cytoplasm. The enzyme catalyses tRNA(Tyr) + L-tyrosine + ATP = L-tyrosyl-tRNA(Tyr) + AMP + diphosphate + H(+). Its function is as follows. Catalyzes the attachment of tyrosine to tRNA(Tyr) in a two-step reaction: tyrosine is first activated by ATP to form Tyr-AMP and then transferred to the acceptor end of tRNA(Tyr). The chain is Tyrosine--tRNA ligase 1 from Bacillus cereus (strain ATCC 10987 / NRS 248).